The following is a 165-amino-acid chain: UI (165 aa).

The signal sequence occupies residues 1 to 18 (MKPVPLILLLATVLLSSH). Val163 is modified (valine amide).

The protein belongs to the sauvagine/corticotropin-releasing factor/urotensin I family.

Its subcellular location is the secreted. Functionally, urotensin is found in the teleost caudal neurosecretory system. It has a suggested role in osmoregulation and as a corticotropin-releasing factor. The non-hormonal portion of this precursor may be a urotensin binding protein, urophysin. The chain is UI from Oncorhynchus mykiss (Rainbow trout).